Consider the following 669-residue polypeptide: RNA-binding protein 14 (669 aa).

RRM domains lie at 1-73 (MKIF…MSRP) and 79-149 (WKIF…LSTK). Residues lysine 126, lysine 135, lysine 138, lysine 149, and lysine 153 each participate in a glycyl lysine isopeptide (Lys-Gly) (interchain with G-Cter in SUMO2) cross-link. 2 disordered regions span residues 148 to 175 (TKGQ…DTAF) and 193 to 232 (NSTG…PLTA). Serine 161 bears the Phosphoserine mark. Residue lysine 164 is modified to N6-acetyllysine; alternate. A Glycyl lysine isopeptide (Lys-Gly) (interchain with G-Cter in SUMO2); alternate cross-link involves residue lysine 164. Threonine 206 bears the Phosphothreonine mark. 6 positions are modified to phosphoserine: serine 220, serine 242, serine 244, serine 256, serine 272, and serine 280. Residues 284–303 (PYRGQLASPSSQSAAASSLG) form a disordered region. A compositionally biased stretch (low complexity) spans 287-303 (GQLASPSSQSAAASSLG). The TRBP-interacting domain; interaction with STIL stretch occupies residues 307 to 354 (GAQPSASALSSYGGQPAAASSLNSYGAQGSSLASYGNQPSSYGAQAAS). Phosphoserine occurs at positions 520, 523, 527, and 562. Residues 569 to 590 (ANSTPPPYERTRLSPPRASYDD) are disordered. Threonine 572 carries the post-translational modification Phosphothreonine. The residue at position 582 (serine 582) is a Phosphoserine. Lysine 600 is covalently cross-linked (Glycyl lysine isopeptide (Lys-Gly) (interchain with G-Cter in SUMO2)). Phosphoserine occurs at positions 618, 620, 623, 627, 643, and 649.

As to quaternary structure, interacts with NCOA6, CITED1 and XRCC5/KU86. Interacts with SS18. Interacts with STIL and interferes with its interaction with CPAP. Interacts with gamma-tubulin. Part of the HDP-RNP complex composed of at least HEXIM1, PRKDC, XRCC5, XRCC6, paraspeckle proteins (SFPQ, NONO, PSPC1, RBM14, and MATR3) and NEAT1 RNA.

It is found in the nucleus. It localises to the nucleolus. Its subcellular location is the cytoplasm. Its function is as follows. May function as a nuclear receptor coactivator, enhancing transcription through other coactivators such as NCOA6 and CITED1. Regulates centriole biogenesis by suppressing the formation of aberrant centriolar protein complexes in the cytoplasm and thus preserving mitotic spindle integrity. Prevents the formation of the STIL-CPAP complex (which can induce the formation of aberrant centriolar protein complexes) by interfering with the interaction of STIL with CPAP. Plays a role in the regulation of DNA virus-mediated innate immune response by assembling into the HDP-RNP complex, a complex that serves as a platform for IRF3 phosphorylation and subsequent innate immune response activation through the cGAS-STING pathway. In Bos taurus (Bovine), this protein is RNA-binding protein 14 (RBM14).